A 208-amino-acid polypeptide reads, in one-letter code: Imidazoleglycerol-phosphate dehydratase (208 aa).

Belongs to the imidazoleglycerol-phosphate dehydratase family.

The enzyme catalyses D-erythro-1-(imidazol-4-yl)glycerol 3-phosphate = 3-(imidazol-4-yl)-2-oxopropyl phosphate + H2O. It participates in amino-acid biosynthesis; L-histidine biosynthesis; L-histidine from 5-phospho-alpha-D-ribose 1-diphosphate: step 6/9. The protein is Imidazoleglycerol-phosphate dehydratase (his3) of Trichoderma harzianum (Hypocrea lixii).